A 503-amino-acid polypeptide reads, in one-letter code: Probable cytosol aminopeptidase (503 aa).

Residues lysine 270 and aspartate 275 each contribute to the Mn(2+) site. Residue lysine 282 is part of the active site. Mn(2+)-binding residues include aspartate 293, aspartate 352, and glutamate 354. Residue arginine 356 is part of the active site.

This sequence belongs to the peptidase M17 family. Mn(2+) is required as a cofactor.

The protein localises to the cytoplasm. It carries out the reaction Release of an N-terminal amino acid, Xaa-|-Yaa-, in which Xaa is preferably Leu, but may be other amino acids including Pro although not Arg or Lys, and Yaa may be Pro. Amino acid amides and methyl esters are also readily hydrolyzed, but rates on arylamides are exceedingly low.. The catalysed reaction is Release of an N-terminal amino acid, preferentially leucine, but not glutamic or aspartic acids.. Functionally, presumably involved in the processing and regular turnover of intracellular proteins. Catalyzes the removal of unsubstituted N-terminal amino acids from various peptides. This Shigella flexneri protein is Probable cytosol aminopeptidase.